The primary structure comprises 502 residues: Cytochrome P450 monooxygenase prhN (502 aa).

Residues serine 14 to tryptophan 30 traverse the membrane as a helical segment. Residue asparagine 165 is glycosylated (N-linked (GlcNAc...) asparagine). Residue cysteine 443 coordinates heme. N-linked (GlcNAc...) asparagine glycosylation is present at asparagine 474.

It belongs to the cytochrome P450 family. Heme serves as cofactor.

The protein localises to the membrane. It participates in secondary metabolite biosynthesis; terpenoid biosynthesis. Functionally, cytochrome P450 monooxygenase; part of the gene cluster that mediates the biosynthesis of paraherquonin, a meroterpenoid with a unique, highly congested hexacyclic molecular architecture. The first step of the pathway is the synthesis of 3,5-dimethylorsellinic acid (DMOA) by the polyketide synthase prhL. Synthesis of DMOA is followed by farnesylation by the prenyltransferase prhE, methylesterification by the methyl-transferase prhM, epoxidation of the prenyl chain by the flavin-dependent monooxygenase prhF, and cyclization of the farnesyl moiety by the terpene cyclase prhH, to yield the tetracyclic intermediate, protoaustinoid A. The short chain dehydrogenase prhI then oxidizes the C-3 alcohol group of the terpene cyclase product to transform protoaustinoid A into protoaustinoid B. The FAD-binding monooxygenase prhJ catalyzes the oxidation of protoaustinoid B into preaustinoid A which is further oxidized into preaustinoid A1 by FAD-binding monooxygenase phrK. Finally, prhA leads to berkeleydione via the berkeleyone B intermediate. PrhA is a multifunctional dioxygenase that first desaturates at C5-C6 to form berkeleyone B, followed by rearrangement of the A/B-ring to form the cycloheptadiene moiety in berkeleydione. Berkeleydione serves as the key intermediate for the biosynthesis of paraherquonin as well as many other meroterpenoids. The cytochrome P450 monooxygenases prhB, prhD, and prhN, as well as the isomerase prhC, are probably involved in the late stage of paraherquonin biosynthesis, after the production of berkeleydione. Especially prhC might be a multifunctional enzyme that catalyzes the D-ring expansion via intramolecular methoxy rearrangement, as well as the hydrolysis of the expanded D-ring. This chain is Cytochrome P450 monooxygenase prhN, found in Penicillium brasilianum.